The chain runs to 197 residues: Adenylate kinase 1 (197 aa).

19 to 24 (GSGKGT) serves as a coordination point for ATP. Positions 39 to 68 (SSGDLLRAEVQSGSPKGKELKAMMERGELV) are NMP. AMP is bound by residues S40, R45, 95-98 (GYPR), and Q102. The segment at 132-142 (KRAETSNRVDD) is LID. R133 contacts ATP. Positions 139 and 150 each coordinate AMP. Residue G178 coordinates ATP.

The protein belongs to the adenylate kinase family. AK1 subfamily. As to quaternary structure, monomer. Mg(2+) is required as a cofactor.

It localises to the cytoplasm. It catalyses the reaction AMP + ATP = 2 ADP. It participates in purine metabolism; purine nucleotide biosynthesis. Catalyzes the reversible transfer of the terminal phosphate group between ATP and AMP. Plays an important role in cellular energy homeostasis and in adenine nucleotide metabolism. This Schistosoma mansoni (Blood fluke) protein is Adenylate kinase 1.